The following is a 284-amino-acid chain: uncharacterized protein (284 aa).

This is an uncharacterized protein from Methanothermobacter thermautotrophicus (Methanobacterium thermoformicicum).